We begin with the raw amino-acid sequence, 73 residues long: Small ribosomal subunit protein eS27 (73 aa).

Residues C28, C31, C47, and C50 each contribute to the Zn(2+) site. The C4-type zinc finger occupies 28–50 (CPKCGNRQVVFSHSTFRARCLNC).

This sequence belongs to the eukaryotic ribosomal protein eS27 family. As to quaternary structure, part of the 30S ribosomal subunit. It depends on Zn(2+) as a cofactor.

The sequence is that of Small ribosomal subunit protein eS27 from Aeropyrum pernix (strain ATCC 700893 / DSM 11879 / JCM 9820 / NBRC 100138 / K1).